A 405-amino-acid polypeptide reads, in one-letter code: NADH-quinone oxidoreductase subunit D (405 aa).

Belongs to the complex I 49 kDa subunit family. In terms of assembly, NDH-1 is composed of 14 different subunits. Subunits NuoB, C, D, E, F, and G constitute the peripheral sector of the complex.

The protein localises to the cell inner membrane. It catalyses the reaction a quinone + NADH + 5 H(+)(in) = a quinol + NAD(+) + 4 H(+)(out). NDH-1 shuttles electrons from NADH, via FMN and iron-sulfur (Fe-S) centers, to quinones in the respiratory chain. The immediate electron acceptor for the enzyme in this species is believed to be ubiquinone. Couples the redox reaction to proton translocation (for every two electrons transferred, four hydrogen ions are translocated across the cytoplasmic membrane), and thus conserves the redox energy in a proton gradient. The sequence is that of NADH-quinone oxidoreductase subunit D from Leptospira borgpetersenii serovar Hardjo-bovis (strain L550).